Reading from the N-terminus, the 360-residue chain is MPTPFAPLKNDTFLRALLRQPTDYTPMWMMRQAGRYLPEYRATRTRAGSFLGLAKNPDYATEVTLQPLDRYDLDAAILFSDILTVPDAMGLGLYFVDGEGPKFERPLRDEKAVQALKVPELDSLQYVFDAVTQIRTELKGRVPLIGFSGSPWTLACYMVEGGGSDDFRTVKAMLYNRPDLMHHILQTNAITVAAYLNAQIDAGAQAVMMFDTWGGALADGIYQQFSLHYMREVMKHVKTEKEGVRIPSIVFTKGGGLWLNEIADVGADAVGLDWTVNLGAARAQVGDRVALQGNLDPSILFAQPEQIRTEVEKVLMSFGKHAPGSGHVFNLGHGISQFTPPESVSVLVDAVHELSRSLHA.

Substrate-binding positions include 31 to 35 (RQAGR), D81, Y157, T212, and H333.

This sequence belongs to the uroporphyrinogen decarboxylase family. As to quaternary structure, homodimer.

It localises to the cytoplasm. The enzyme catalyses uroporphyrinogen III + 4 H(+) = coproporphyrinogen III + 4 CO2. Its pathway is porphyrin-containing compound metabolism; protoporphyrin-IX biosynthesis; coproporphyrinogen-III from 5-aminolevulinate: step 4/4. Its function is as follows. Catalyzes the decarboxylation of four acetate groups of uroporphyrinogen-III to yield coproporphyrinogen-III. This is Uroporphyrinogen decarboxylase from Herminiimonas arsenicoxydans.